Reading from the N-terminus, the 106-residue chain is Prothymosin alpha-B (106 aa).

A compositionally biased stretch (basic and acidic residues) spans 1-39 (MADAKVDSATEISAKDLKEKKLIEEKENGKDATNGKENE). The tract at residues 1-106 (MADAKVDSAT…DVDPKKQKVN (106 aa)) is disordered. Serine 8 is subject to Phosphoserine. Position 10 is a phosphothreonine (threonine 10). 2 stretches are compositionally biased toward acidic residues: residues 40 to 76 (ENGE…DEDL) and 85 to 98 (DDDE…EDDV).

It belongs to the pro/parathymosin family. In terms of tissue distribution, uniformly expressed in all embryonic cells at 4 and 8 hpf. At the 20-somite stage (18 hpf), ubiquitously expressed in the developing nervous system, in the tail bud and in the pronephric ducts. Also expressed in some placodes, including the anterior lateral line placode, otic vesicle and olfactory placode. At 27 hpf, strong expression persists in the central nervous system and the olfactory placode. Expressed strongly in the eyes and the pectoral fin buds. In the tail region, expressed in the spinal cord, in the posterior lateral line precursors, and persists in the pronephric ducts. At 48 hpf, expressed in all head territories including the developing brain, eyes, and pharyngeal arches. More caudally, expression persists in the pectoral fin buds, the spinal cord and, for the first time, appears in the intestine. At 72 hpf, expressed only in restricted regions of the brain, in pharyngeal arches region and in the amacrine cells and the horizontal cells of the retina.

It is found in the nucleus. This chain is Prothymosin alpha-B, found in Danio rerio (Zebrafish).